Consider the following 629-residue polypeptide: 1-deoxy-D-xylulose-5-phosphate synthase (629 aa).

Thiamine diphosphate is bound by residues His-72 and 113-115 (GHA). Asp-144 is a Mg(2+) binding site. Residues 145–146 (GA), Asn-174, Tyr-287, and Glu-370 each bind thiamine diphosphate. Asn-174 serves as a coordination point for Mg(2+).

The protein belongs to the transketolase family. DXPS subfamily. Homodimer. Mg(2+) is required as a cofactor. Requires thiamine diphosphate as cofactor.

The enzyme catalyses D-glyceraldehyde 3-phosphate + pyruvate + H(+) = 1-deoxy-D-xylulose 5-phosphate + CO2. It participates in metabolic intermediate biosynthesis; 1-deoxy-D-xylulose 5-phosphate biosynthesis; 1-deoxy-D-xylulose 5-phosphate from D-glyceraldehyde 3-phosphate and pyruvate: step 1/1. Catalyzes the acyloin condensation reaction between C atoms 2 and 3 of pyruvate and glyceraldehyde 3-phosphate to yield 1-deoxy-D-xylulose-5-phosphate (DXP). The polypeptide is 1-deoxy-D-xylulose-5-phosphate synthase (Prochlorococcus marinus (strain MIT 9301)).